A 100-amino-acid chain; its full sequence is Ubiquitin-related modifier 1 homolog (100 aa).

The residue at position 100 (Gly100) is a 1-thioglycine. Gly100 participates in a covalent cross-link: Glycyl lysine isopeptide (Gly-Lys) (interchain with K-? in acceptor proteins).

The protein belongs to the URM1 family. In terms of processing, C-terminal thiocarboxylation occurs in 2 steps, it is first acyl-adenylated (-COAMP) via the hesA/moeB/thiF part of the MOCS3 homolog, then thiocarboxylated (-COSH) via the rhodanese domain of the MOCS3 homolog.

The protein resides in the cytoplasm. It participates in tRNA modification; 5-methoxycarbonylmethyl-2-thiouridine-tRNA biosynthesis. Its function is as follows. Acts as a sulfur carrier required for 2-thiolation of mcm(5)S(2)U at tRNA wobble positions of cytosolic tRNA(Lys), tRNA(Glu) and tRNA(Gln). Serves as sulfur donor in tRNA 2-thiolation reaction by being thiocarboxylated (-COSH) at its C-terminus by MOCS3. The sulfur is then transferred to tRNA to form 2-thiolation of mcm(5)S(2)U. Also acts as a ubiquitin-like protein (UBL) that is covalently conjugated via an isopeptide bond to lysine residues of target proteins. The thiocarboxylated form serves as substrate for conjugation and oxidative stress specifically induces the formation of UBL-protein conjugates. This Oryza sativa subsp. japonica (Rice) protein is Ubiquitin-related modifier 1 homolog.